The following is an 871-amino-acid chain: Valine--tRNA ligase (871 aa).

The 'HIGH' region motif lies at 47–57 (PNVTGRLHIGH). A 'KMSKS' region motif is present at residues 534 to 538 (KMSKS). Lysine 537 lines the ATP pocket. Residues 805–871 (DLTPILNRLN…IEEELARLTR (67 aa)) are a coiled coil.

It belongs to the class-I aminoacyl-tRNA synthetase family. ValS type 1 subfamily. As to quaternary structure, monomer.

Its subcellular location is the cytoplasm. It catalyses the reaction tRNA(Val) + L-valine + ATP = L-valyl-tRNA(Val) + AMP + diphosphate. In terms of biological role, catalyzes the attachment of valine to tRNA(Val). As ValRS can inadvertently accommodate and process structurally similar amino acids such as threonine, to avoid such errors, it has a 'posttransfer' editing activity that hydrolyzes mischarged Thr-tRNA(Val) in a tRNA-dependent manner. The polypeptide is Valine--tRNA ligase (Nitratiruptor sp. (strain SB155-2)).